The following is a 724-amino-acid chain: 1,4-alpha-glucan branching enzyme GlgB 1 (724 aa).

Aspartate 403 (nucleophile) is an active-site residue. The Proton donor role is filled by glutamate 456.

It belongs to the glycosyl hydrolase 13 family. GlgB subfamily. Monomer.

The catalysed reaction is Transfers a segment of a (1-&gt;4)-alpha-D-glucan chain to a primary hydroxy group in a similar glucan chain.. It participates in glycan biosynthesis; glycogen biosynthesis. Catalyzes the formation of the alpha-1,6-glucosidic linkages in glycogen by scission of a 1,4-alpha-linked oligosaccharide from growing alpha-1,4-glucan chains and the subsequent attachment of the oligosaccharide to the alpha-1,6 position. The polypeptide is 1,4-alpha-glucan branching enzyme GlgB 1 (glgB1) (Xanthomonas axonopodis pv. citri (strain 306)).